The chain runs to 276 residues: Protease HtpX homolog (276 aa).

Residues 16–36 form a helical membrane-spanning segment; that stretch reads LFIWFGGMIAGQTGMVIAFLV. Position 130 (His130) interacts with Zn(2+). Residue Glu131 is part of the active site. His134 contributes to the Zn(2+) binding site. 2 helical membrane passes run 142 to 162 and 173 to 193; these read IGTVAATIAGAIAMLANFGMF and IFVMLALMFIMPMAASIIQMT. Residue Glu199 participates in Zn(2+) binding.

Belongs to the peptidase M48B family. It depends on Zn(2+) as a cofactor.

It localises to the cell inner membrane. The chain is Protease HtpX homolog from Sulfurovum sp. (strain NBC37-1).